Here is a 1060-residue protein sequence, read N- to C-terminus: Protein transport protein Sec16B (1060 aa).

The segment at 1 to 86 is disordered; the sequence is MELWAPQRLP…GDWHQPVSGV (86 aa). The interval 34–224 is required for endoplasmic reticulum localization; that stretch reads RPVPHSWHNG…PSLASESNLL (191 aa). Residues 41 to 50 show a composition bias toward basic and acidic residues; the sequence is HNGERFHQWQ. The segment covering 51-60 has biased composition (polar residues); it reads DNRGSPQPQQ. Serine 55, serine 143, serine 167, serine 188, and serine 191 each carry phosphoserine. Disordered stretches follow at residues 163 to 236, 245 to 264, 711 to 733, 770 to 796, and 834 to 1060; these read ENQH…SSSY, APERDDPPASAAWSPVQADV, KVAGDIGDPHPTRSDISGAGGTT, PSPQQPFPLQPGSYPAGGGAGQTGTPR, and PGEN…TQPC. Composition is skewed to polar residues over residues 165–195 and 213–222; these read QHSPFGTNSETHFQSNSRNPCKDSPASNSGQ and NKPSLASESN. The span at 223-236 shows a compositional bias: low complexity; it reads LLQQRESGLSSSSY. A phosphoserine mark is found at serine 254 and serine 258. Residues 271–713 form a central conserved domain (CCD); required for localization to endoplasmic reticulum exit sites region; it reads APMKFYIPHV…LRRQLEQKVA (443 aa). The span at 837–847 shows a compositional bias: polar residues; the sequence is NTVSQETSQPP. Threonine 858 is subject to Phosphothreonine. Phosphoserine is present on residues serine 868, serine 871, serine 874, serine 882, and serine 883. Composition is skewed to basic and acidic residues over residues 875–890 and 899–908; these read AKEDEKESSDEADKNS and KLGDGKEHTK. Low complexity predominate over residues 909-918; that stretch reads SSGFGWFSWF. The segment covering 930 to 941 has biased composition (acidic residues); sequence GDEDSSDSPDSE. A compositionally biased stretch (gly residues) spans 991–1001; that stretch reads AAAGAGVGGLS. A compositionally biased stretch (polar residues) spans 1031–1046; that stretch reads NPSQVPQLPTATSLNR.

It belongs to the SEC16 family. SEC16A and SEC16B are each present in multiple copies in a heteromeric complex. Interacts with TFG. Interacts with SEC13. In terms of tissue distribution, ubiquitous.

It is found in the endoplasmic reticulum membrane. The protein resides in the golgi apparatus membrane. In terms of biological role, plays a role in the organization of the endoplasmic reticulum exit sites (ERES), also known as transitional endoplasmic reticulum (tER). Required for secretory cargo traffic from the endoplasmic reticulum to the Golgi apparatus. Involved in peroxisome biogenesis. Regulates the transport of peroxisomal biogenesis factors PEX3 and PEX16 from the ER to peroxisomes. The chain is Protein transport protein Sec16B (SEC16B) from Homo sapiens (Human).